The primary structure comprises 914 residues: DNA mismatch repair protein MutS (914 aa).

The interval 1-25 is disordered; the sequence is MDKKNDHKNNLIPQPASSFASSQER. Over residues 11–25 the composition is skewed to polar residues; it reads LIPQPASSFASSQER. An ATP-binding site is contributed by 662–669; that stretch reads GPNMGGKS.

The protein belongs to the DNA mismatch repair MutS family.

In terms of biological role, this protein is involved in the repair of mismatches in DNA. It is possible that it carries out the mismatch recognition step. This protein has a weak ATPase activity. The chain is DNA mismatch repair protein MutS from Bartonella tribocorum (strain CIP 105476 / IBS 506).